The primary structure comprises 406 residues: S-adenosylmethionine synthase (406 aa).

Residue 140–145 (GRGSVD) participates in ATP binding.

The protein belongs to the AdoMet synthase 2 family. Mg(2+) serves as cofactor.

It carries out the reaction L-methionine + ATP + H2O = S-adenosyl-L-methionine + phosphate + diphosphate. The protein operates within amino-acid biosynthesis; S-adenosyl-L-methionine biosynthesis; S-adenosyl-L-methionine from L-methionine: step 1/1. Catalyzes the formation of S-adenosylmethionine from methionine and ATP. This is S-adenosylmethionine synthase (mat) from Aeropyrum pernix (strain ATCC 700893 / DSM 11879 / JCM 9820 / NBRC 100138 / K1).